Consider the following 371-residue polypeptide: MPHQQILILFGLLPVATNISTWWNFGSMLLACSSMQVLTGFFLAVHYTANINLAFSSIVHITRDVPYGWLMQNLHAIGASMFFICIYTHIARGLYYGSYLNKKTWLSGTTLLIMLMATAFFGYVLPWGQMSFWAATVITNLLTAIPYLGTTMTTWLWGGFAINDPTLTRFFALHFILPFGIISLSSLHIMLLHEDGSSNPLGTNSDIDKIPFHPYHTYKDMLMLSLMVLALLTTVAFFPDIFNDPENFSKANPLVTPQHIKPEWYFLFAYGILRSIPNKLGGALALVMSIMILLTTPFTHTSTIRSMTFRPIMQFMFWTLVATFTVITWAATKPVEPPFTAISQAASTMYFMFFITNPIVGWFENKIMKYN.

The next 4 membrane-spanning stretches (helical) occupy residues 25 to 45, 69 to 90, 105 to 125, and 170 to 190; these read FGSM…FLAV, WLMQ…YTHI, WLSG…GYVL, and FFAL…LHIM. 2 residues coordinate heme b: His-75 and His-89. Residues His-174 and His-188 each coordinate heme b. His-193 contacts a ubiquinone. Transmembrane regions (helical) follow at residues 218–238, 280–300, 312–332, and 339–358; these read YKDM…VAFF, LGGA…PFTH, IMQF…WAAT, and FTAI…ITNP.

It belongs to the cytochrome b family. The cytochrome bc1 complex contains 3 respiratory subunits (MT-CYB, CYC1 and UQCRFS1), 2 core proteins (UQCRC1 and UQCRC2) and probably 6 low-molecular weight proteins. It depends on heme b as a cofactor.

The protein localises to the mitochondrion inner membrane. Its function is as follows. Component of the ubiquinol-cytochrome c reductase complex (complex III or cytochrome b-c1 complex) that is part of the mitochondrial respiratory chain. The b-c1 complex mediates electron transfer from ubiquinol to cytochrome c. Contributes to the generation of a proton gradient across the mitochondrial membrane that is then used for ATP synthesis. This is Cytochrome b (MT-CYB) from Eryx colubrinus loveridgei.